A 248-amino-acid polypeptide reads, in one-letter code: 23S rRNA (guanosine(2553)-2'-O)-methyltransferase RlmP (248 aa).

S-adenosyl-L-methionine is bound by residues Arg123, Gly204, Val224, and Leu233.

It belongs to the class IV-like SAM-binding methyltransferase superfamily. RNA methyltransferase TrmH family. Homodimer.

It localises to the cytoplasm. The catalysed reaction is guanosine(2553) in 23S rRNA + S-adenosyl-L-methionine = 2'-O-methylguanosine(2553) in 23S rRNA + S-adenosyl-L-homocysteine + H(+). Specifically methylates the ribose of guanosine 2553 (G2553) in 23S rRNA. When the target G2553 is mutated, is able to methylate the ribose of adenosine, but it cannot methylate cytidine nor uridine. Modifies free 23S rRNA but not the fully assembled ribosome nor the 50S subunit, suggesting that the modification occurs early during ribosome biogenesis. The protein is 23S rRNA (guanosine(2553)-2'-O)-methyltransferase RlmP of Bacillus subtilis (strain 168).